The primary structure comprises 132 residues: Small ribosomal subunit protein uS11 (132 aa).

A disordered region spans residues 1 to 21; sequence MAAPKSAVRKPRRKDKKNIAV. Positions 7 to 16 are enriched in basic residues; sequence AVRKPRRKDK.

It belongs to the universal ribosomal protein uS11 family. As to quaternary structure, part of the 30S ribosomal subunit. Interacts with proteins S7 and S18. Binds to IF-3.

Functionally, located on the platform of the 30S subunit, it bridges several disparate RNA helices of the 16S rRNA. Forms part of the Shine-Dalgarno cleft in the 70S ribosome. This chain is Small ribosomal subunit protein uS11, found in Clavibacter sepedonicus (Clavibacter michiganensis subsp. sepedonicus).